The following is an 809-amino-acid chain: Bifunctional enzyme MurC/Ddl (809 aa).

Residues 1–450 are UDP-N-acetylmuramate--alanine ligase; it reads MKGTPQYHFI…GEALKDFNPK (450 aa). ATP-binding positions include 111–117 and 606–661; these read GSHGKTG and IETF…SREI. The segment at 451–809 is D-alanine--D-alanine ligase; the sequence is KLSIGLVCGG…FTKEQDLVKR (359 aa). In terms of domain architecture, ATP-grasp spans 573 to 784; that stretch reads KRIASAVGVP…QEQIVDHFII (212 aa). Mg(2+) is bound by residues D738, E751, and N753.

It in the N-terminal section; belongs to the MurCDEF family. The protein in the C-terminal section; belongs to the D-alanine--D-alanine ligase family. Mg(2+) serves as cofactor. Mn(2+) is required as a cofactor.

It localises to the cytoplasm. The catalysed reaction is UDP-N-acetyl-alpha-D-muramate + L-alanine + ATP = UDP-N-acetyl-alpha-D-muramoyl-L-alanine + ADP + phosphate + H(+). The enzyme catalyses 2 D-alanine + ATP = D-alanyl-D-alanine + ADP + phosphate + H(+). It participates in cell wall biogenesis; peptidoglycan biosynthesis. In terms of biological role, cell wall formation. This Chlamydia pneumoniae (Chlamydophila pneumoniae) protein is Bifunctional enzyme MurC/Ddl (murC/ddl).